The chain runs to 782 residues: Potassium transporter 6 (782 aa).

Topologically, residues 1–18 are cytoplasmic; that stretch reads MEIESGSYQNAKKESWRT. Residues 19 to 39 traverse the membrane as a helical segment; that stretch reads VLTLAYQSLGVVYGDLSISPL. Over 40–61 the chain is Extracellular; the sequence is YVYKSTFAEDIHHSESNEEIFG. The helical transmembrane segment at 62–82 threads the bilayer; sequence VLSFIFWTITLVPLLKYVFIV. The Cytoplasmic portion of the chain corresponds to 83 to 153; sequence LRADDNGEGG…TLEKHGVLQK (71 aa). The helical transmembrane segment at 154–174 threads the bilayer; it reads ILLVLALIGTCMVIGDGVLTP. Residues 175–195 are Extracellular-facing; it reads AISVFSAVSGVELSMSKEHHK. Residues 196–216 traverse the membrane as a helical segment; it reads YIELPAACVILIGLFALQHYG. At 217–219 the chain is on the cytoplasmic side; that stretch reads THR. The chain crosses the membrane as a helical span at residues 220-240; the sequence is VGFLFAPVILLWLMCISAIGV. Residues 241 to 270 lie on the Extracellular side of the membrane; that stretch reads YNIFHWNPHVYQALSPYYMYKFLKKTQSRG. The chain crosses the membrane as a helical span at residues 271–291; that stretch reads WMSLGGILLCITGSEAMFADL. The Cytoplasmic segment spans residues 292 to 296; it reads GHFSQ. A helical membrane pass occupies residues 297–317; the sequence is LSIKIAFTSLVYPSLILAYMG. Topologically, residues 318 to 347 are extracellular; the sequence is QAAYLSQHHIIESEYNIGFYVSVPERLRWP. The chain crosses the membrane as a helical span at residues 348–368; sequence VLVIAILAAVVGSQAIITGTF. Residues 369–395 are Cytoplasmic-facing; sequence SIIKQCSALGCFPKVKIVHTSSKIHGQ. The chain crosses the membrane as a helical span at residues 396–416; that stretch reads IYIPEINWILMVLCLAVTIGF. Topologically, residues 417–421 are extracellular; sequence RDTKR. The next 2 helical transmembrane spans lie at 422–442 and 443–463; these read LGNA…CLMS and LVIV…VVFF. Residues 464-474 are Extracellular-facing; that stretch reads GTIESLYFSAS. The chain crosses the membrane as a helical span at residues 475–495; it reads LIKFLEGAWVPIALAFCFLLA. The Cytoplasmic segment spans residues 496-782; sequence MCTWHYGTLK…TLEVGMIYNV (287 aa). The segment covering 664 to 675 has biased composition (basic and acidic residues); the sequence is YESDIDDPDKPG. Positions 664 to 693 are disordered; sequence YESDIDDPDKPGTSEIRSPKPKKKSKSKVK. Residues 682-693 show a composition bias toward basic residues; it reads PKPKKKSKSKVK.

It belongs to the HAK/KUP transporter (TC 2.A.72.3) family.

It is found in the cell membrane. Probable potassium transporter. In Arabidopsis thaliana (Mouse-ear cress), this protein is Potassium transporter 6 (POT6).